Consider the following 424-residue polypeptide: UDP-N-acetylglucosamine 1-carboxyvinyltransferase (424 aa).

22 to 23 (KN) provides a ligand contact to phosphoenolpyruvate. UDP-N-acetyl-alpha-D-glucosamine is bound at residue Arg-95. Cys-119 acts as the Proton donor in catalysis. Cys-119 is subject to 2-(S-cysteinyl)pyruvic acid O-phosphothioketal. UDP-N-acetyl-alpha-D-glucosamine is bound by residues 124 to 128 (RPVDQ), Asp-311, and Ile-333.

It belongs to the EPSP synthase family. MurA subfamily.

Its subcellular location is the cytoplasm. It catalyses the reaction phosphoenolpyruvate + UDP-N-acetyl-alpha-D-glucosamine = UDP-N-acetyl-3-O-(1-carboxyvinyl)-alpha-D-glucosamine + phosphate. It participates in cell wall biogenesis; peptidoglycan biosynthesis. Cell wall formation. Adds enolpyruvyl to UDP-N-acetylglucosamine. The chain is UDP-N-acetylglucosamine 1-carboxyvinyltransferase from Polaromonas naphthalenivorans (strain CJ2).